Reading from the N-terminus, the 611-residue chain is MSRRTISKTMEHPSKTSIIKAAGLVFGDIGTSPIYTLAVLFLFLPPTPENIMGAVSLIFWTLLIMVTVQYTFLAMRLSETGEGGTLVLKGILIPLLKKPKGVAVFTLLATLGISLMIGECVITPAISILSAVEGVRQIPGFELIAQDWLIFLAILIALGLFLFQKRGTEGVSRTFGPVMVIWFLTLFISGAISVAFSPEILLAINPIYAVEFFIHNGLLGFFSLSMIVLCATGAEALFADMGHLGREPIQYAWGFVFIAVFFSYLGQAAYLLRNTDVINPLFEMIFSLSQILYIPFLLLMIIATIIASQAVISGIFSIIYQAITTHLLPMLPVDYTSDELRTQIYINTVNWLLCIAVICVLLIFQYSERLASAYGLAVTGTMSITGSFMIAIFLQRRKYLYMGIALIVTLVDITYFLSTVSKITHGGYLSLVIAAIPFTIVIIYTSGQRALYRSMKPMGHDQFIKKYTRAYKTARHLRGTALFFARSLDQVPAYISRTMFNNEIIYEENVIISLDIKDEPYGFSWHFDKSIEPGLSHLSISYGYMQIIDLMRIIRDAGIEEKTIFYGMEEIVTRNIIWKIFSAIKRLCPSFVQYYRLPSHKVHGVITRVEL.

Transmembrane regions (helical) follow at residues 24–44, 55–75, 102–122, 143–163, 175–195, 218–238, 252–272, 275–295, 296–316, 344–364, 374–394, 400–420, and 423–443; these read LVFGDIGTSPIYTLAVLFLFL, VSLIFWTLLIMVTVQYTFLAM, VAVFTLLATLGISLMIGECVI, LIAQDWLIFLAILIALGLFLF, FGPVMVIWFLTLFISGAISVA, LLGFFSLSMIVLCATGAEALF, AWGFVFIAVFFSYLGQAAYLL, TDVINPLFEMIFSLSQILYIP, FLLLMIIATIIASQAVISGIF, IYINTVNWLLCIAVICVLLIF, YGLAVTGTMSITGSFMIAIFL, LYMGIALIVTLVDITYFLSTV, and ITHGGYLSLVIAAIPFTIVII.

This sequence belongs to the HAK/KUP transporter (TC 2.A.72) family.

It is found in the cell membrane. It catalyses the reaction K(+)(in) + H(+)(in) = K(+)(out) + H(+)(out). Its function is as follows. Transport of potassium into the cell. Likely operates as a K(+):H(+) symporter. This Methanospirillum hungatei JF-1 (strain ATCC 27890 / DSM 864 / NBRC 100397 / JF-1) protein is Probable potassium transport system protein Kup.